The chain runs to 244 residues: Inactive chemokine-binding protein (244 aa).

Positions 1 to 79 (MHVPASLQQS…STSVEDVDPP (79 aa)) are disordered. The span at 37 to 53 (QDQTPTNDKICQSVTEI) shows a compositional bias: polar residues. Positions 54–77 (TESESDPDPEVESEDDSTSVEDVD) are enriched in acidic residues.

The protein belongs to the orthopoxvirus OPG001 family.

Its subcellular location is the host cytoplasm. The protein is truncated in this vaccinal strain and presumably inactive, because the lack of signal peptide prevents the protein of being secreted. In the wild-type viruses inhibits host immune defense by binding to host chemokines. Binds host CC chemokines (beta chemokines) such as RANTES with high affinity, but not CXC or C chemokines (alpha and gamma chemokines). The sequence is that of Inactive chemokine-binding protein (OPG001) from Vaccinia virus (strain Western Reserve) (VACV).